The following is a 419-amino-acid chain: Tyrosine--tRNA ligase (419 aa).

Tyr34 lines the L-tyrosine pocket. A 'HIGH' region motif is present at residues 39–48 (PTADSLHIGN). Positions 169 and 173 each coordinate L-tyrosine. A 'KMSKS' region motif is present at residues 230–234 (KFGKT). Lys233 contributes to the ATP binding site. Residues 352–419 (VPLVELLVSA…KKKYYLIRYA (68 aa)) enclose the S4 RNA-binding domain.

It belongs to the class-I aminoacyl-tRNA synthetase family. TyrS type 1 subfamily. In terms of assembly, homodimer.

It localises to the cytoplasm. The catalysed reaction is tRNA(Tyr) + L-tyrosine + ATP = L-tyrosyl-tRNA(Tyr) + AMP + diphosphate + H(+). Functionally, catalyzes the attachment of tyrosine to tRNA(Tyr) in a two-step reaction: tyrosine is first activated by ATP to form Tyr-AMP and then transferred to the acceptor end of tRNA(Tyr). The chain is Tyrosine--tRNA ligase from Bacillus caldotenax.